The sequence spans 86 residues: Conotoxin S6.10 (86 aa).

The N-terminal stretch at 1-22 (MKLTCVLIIAVLFLTACQLATA) is a signal peptide. A propeptide spanning residues 23–45 (KTYSKGRQKHRALRSTDKNIKLT) is cleaved from the precursor. Cystine bridges form between cysteine 48/cysteine 62, cysteine 55/cysteine 66, and cysteine 61/cysteine 73.

This sequence belongs to the conotoxin O1 superfamily. As to expression, expressed by the venom duct.

Its subcellular location is the secreted. The sequence is that of Conotoxin S6.10 from Conus striatus (Striated cone).